A 320-amino-acid chain; its full sequence is Ferrochelatase (320 aa).

Fe cation is bound by residues His-194 and Glu-275.

The protein belongs to the ferrochelatase family. As to quaternary structure, monomer.

The protein resides in the cytoplasm. It carries out the reaction heme b + 2 H(+) = protoporphyrin IX + Fe(2+). Its pathway is porphyrin-containing compound metabolism; protoheme biosynthesis; protoheme from protoporphyrin-IX: step 1/1. Functionally, catalyzes the ferrous insertion into protoporphyrin IX. The sequence is that of Ferrochelatase from Escherichia coli (strain 55989 / EAEC).